Reading from the N-terminus, the 190-residue chain is MAAFRTTAWRLISGVLGVICLVLMAALGVLLKNSLTKRSVQPGPSADLQEEYNLHEEEESCLGCLGSGCYSCQEKWIGYQCNCYFISNELKTWKDGRDFCVSHNSSLLQIQTRNEPAFMKFSTSFYWIGLSYDEEHHAWLWEDNSTLSQDLLPFFKSVNPKNCIMYNPRGRILDAYCEKKFRYICKQQLI.

The Cytoplasmic portion of the chain corresponds to 1 to 10 (MAAFRTTAWR). A helical; Signal-anchor for type II membrane protein membrane pass occupies residues 11–31 (LISGVLGVICLVLMAALGVLL). Residues 32 to 190 (KNSLTKRSVQ…FRYICKQQLI (159 aa)) lie on the Extracellular side of the membrane. Intrachain disulfides connect Cys-69–Cys-81, Cys-72–Cys-83, Cys-100–Cys-185, and Cys-163–Cys-177. Residues 79–186 (YQCNCYFISN…CEKKFRYICK (108 aa)) form the C-type lectin domain. Asn-104 and Asn-144 each carry an N-linked (GlcNAc...) asparagine glycan.

Can form disulfide-bonded heterodimer with NKG2 family members KLRC1 and KLRC2. KLRD1-KLRC1 heterodimer interacts with peptide-bound MHC-E-B2M heterotrimeric complex. KLRD1 plays a prominent role in directly interacting with MHC-E. KLRD1-KLRC1 interacts with much higher affinity with peptide-bound MHC-E-B2M than KLRD1-KLRC2. Interacts with the adapter protein TYROBP/DAP12; this interaction is required for cell surface expression and cell activation.

The protein localises to the cell membrane. Functionally, immune receptor involved in self-nonself discrimination. In complex with KLRC1 or KLRC2 on cytotoxic and regulatory lymphocyte subsets, recognizes non-classical major histocompatibility (MHC) class Ib molecule MHC-E loaded with self-peptides derived from the signal sequence of classical MHC class Ia and non-classical MHC class Ib molecules. Enables cytotoxic cells to monitor the expression of MHC class I molecules in healthy cells and to tolerate self. Primarily functions as a ligand binding subunit as it lacks the capacity to signal. In terms of biological role, KLRD1-KLRC1 acts as an immune inhibitory receptor. Key inhibitory receptor on natural killer (NK) cells that regulates their activation and effector functions. Dominantly counteracts T cell receptor signaling on a subset of memory/effector CD8-positive T cells as part of an antigen-driven response to avoid autoimmunity. On intraepithelial CD8-positive gamma-delta regulatory T cells triggers TGFB1 secretion, which in turn limits the cytotoxic programming of intraepithelial CD8-positive alpha-beta T cells, distinguishing harmless from pathogenic antigens. In MHC-E-rich tumor microenvironment, acts as an immune inhibitory checkpoint and may contribute to progressive loss of effector functions of NK cells and tumor-specific T cells, a state known as cell exhaustion. Upon MHC-E-peptide binding, transmits intracellular signals through KLRC1 immunoreceptor tyrosine-based inhibition motifs (ITIMs) by recruiting INPP5D/SHIP-1 and INPPL1/SHIP-2 tyrosine phosphatases to ITIMs, and ultimately opposing signals transmitted by activating receptors through dephosphorylation of proximal signaling molecules. Its function is as follows. KLRD1-KLRC2 acts as an immune activating receptor. On cytotoxic lymphocyte subsets recognizes MHC-E loaded with signal sequence-derived peptides from non-classical MHC class Ib MHC-G molecules, likely playing a role in the generation and effector functions of adaptive NK cells and in maternal-fetal tolerance during pregnancy. Regulates the effector functions of terminally differentiated cytotoxic lymphocyte subsets, and in particular may play a role in adaptive NK cell response to viral infection. Upon MHC-E-peptide binding, transmits intracellular signals via the adapter protein TYROBP/DAP12, triggering the phosphorylation of proximal signaling molecules and cell activation. This Bos taurus (Bovine) protein is Natural killer cells antigen CD94 (KLRD1).